The sequence spans 184 residues: Large ribosomal subunit protein eL18 (184 aa).

This sequence belongs to the eukaryotic ribosomal protein eL18 family.

The protein resides in the cytoplasm. This chain is Large ribosomal subunit protein eL18 (RPL18), found in Theileria parva (East coast fever infection agent).